A 104-amino-acid chain; its full sequence is Pole-localizer protein TmaR (104 aa).

2 coiled-coil regions span residues 7 to 34 and 76 to 96; these read IVNQ…NRKR and SAEI…LTEE.

Belongs to the pole-localizer TmaR family.

It localises to the cytoplasm. Pole-localizer protein involved in the regulation of several cellular processes. The polypeptide is Pole-localizer protein TmaR (Vibrio atlanticus (strain LGP32) (Vibrio splendidus (strain Mel32))).